Consider the following 895-residue polypeptide: Catenin alpha-3 (895 aa).

The residue at position 56 (Ser56) is a Phosphoserine. The stretch at Glu74–Asp111 forms a coiled coil. Phosphoserine is present on Ser160. Positions Arg325 to Lys379 form a coiled coil. Phosphoserine is present on residues Ser637 and Ser647. The residue at position 649 (Thr649) is a Phosphothreonine.

The protein belongs to the vinculin/alpha-catenin family. Interacts with CTNNB1. Interacts with PKP2. As to expression, predominantly expressed in heart and testis. Expressed at lower levels in brain, kidney, liver and skeletal muscle.

Its subcellular location is the cytoplasm. It is found in the cytoskeleton. It localises to the cell junction. The protein localises to the desmosome. May be involved in formation of stretch-resistant cell-cell adhesion complexes. The chain is Catenin alpha-3 from Homo sapiens (Human).